A 226-amino-acid chain; its full sequence is Ribose-5-phosphate isomerase A (226 aa).

Residues 28-31 (TGST), 84-87 (DGAD), and 97-100 (KGLG) contribute to the substrate site. E106 acts as the Proton acceptor in catalysis. K124 is a binding site for substrate.

Belongs to the ribose 5-phosphate isomerase family. Homodimer.

It catalyses the reaction aldehydo-D-ribose 5-phosphate = D-ribulose 5-phosphate. The protein operates within carbohydrate degradation; pentose phosphate pathway; D-ribose 5-phosphate from D-ribulose 5-phosphate (non-oxidative stage): step 1/1. Its function is as follows. Catalyzes the reversible conversion of ribose-5-phosphate to ribulose 5-phosphate. The protein is Ribose-5-phosphate isomerase A of Deinococcus radiodurans (strain ATCC 13939 / DSM 20539 / JCM 16871 / CCUG 27074 / LMG 4051 / NBRC 15346 / NCIMB 9279 / VKM B-1422 / R1).